Here is a 65-residue protein sequence, read N- to C-terminus: Small ribosomal subunit protein eS27 (65 aa).

Zn(2+) contacts are provided by C20, C23, C39, and C42. The segment at 20–42 (CIDCGNEQIVFSHPATRVRCLVC) adopts a C4-type zinc-finger fold.

It belongs to the eukaryotic ribosomal protein eS27 family. As to quaternary structure, part of the 30S ribosomal subunit. The cofactor is Zn(2+).

The sequence is that of Small ribosomal subunit protein eS27 from Pyrococcus horikoshii (strain ATCC 700860 / DSM 12428 / JCM 9974 / NBRC 100139 / OT-3).